We begin with the raw amino-acid sequence, 344 residues long: Beta-1,4-galactosyltransferase 4 (344 aa).

Residues 1-12 lie on the Cytoplasmic side of the membrane; that stretch reads MGCNPPYLLPYR. A helical; Signal-anchor for type II membrane protein membrane pass occupies residues 13–38; that stretch reads LRLLLFFTLCLTVVGWVTSNYFVDPI. Residues 39-344 lie on the Lumenal side of the membrane; the sequence is QVIPKAKVFM…NITVDFWTGV (306 aa). A disulfide bridge links Cys-77 with Cys-118. UDP-alpha-D-galactose is bound by residues 129–133, 168–170, and 195–196; these read PHRNR, FNR, and VD. Cys-189 and Cys-208 are oxidised to a cystine. Asp-196 serves as a coordination point for Mn(2+). Asn-220 is a glycosylation site (N-linked (GlcNAc...) asparagine). The UDP-alpha-D-galactose site is built by Tyr-224 and Trp-256. Residue 258 to 261 coordinates N-acetyl-D-glucosamine; sequence GEDD. His-289 contacts Mn(2+). 289-291 serves as a coordination point for UDP-alpha-D-galactose; it reads HTR. Arg-301 serves as a coordination point for N-acetyl-D-glucosamine. Asn-335 carries an N-linked (GlcNAc...) asparagine glycan.

Belongs to the glycosyltransferase 7 family. It depends on Mn(2+) as a cofactor.

It is found in the golgi apparatus. Its subcellular location is the golgi stack membrane. It catalyses the reaction N-acetyl-D-glucosamine + UDP-alpha-D-galactose = beta-D-galactosyl-(1-&gt;4)-N-acetyl-D-glucosamine + UDP + H(+). The enzyme catalyses a beta-D-GlcNAc-(1-&gt;3)-beta-D-Gal-(1-&gt;4)-beta-D-Glc-(1&lt;-&gt;1)-Cer(d18:1(4E)) + UDP-alpha-D-galactose = a neolactoside nLc4Cer(d18:1(4E)) + UDP + H(+). The protein operates within protein modification; protein glycosylation. In terms of biological role, galactose (Gal) transferase involved in the biosynthesis of glycoproteins, proteoglycans, and glycosyphingolipids. Catalyzes the transfer of Gal residue via a beta1-&gt;4 linkage from UDP-Gal to the non-reducing terminal N-acetyl glucosamine 6-O-sulfate (6-O-sulfoGlcNAc) in the linearly growing chain of both N- and O-linked keratan sulfate proteoglycans. Cooperates with B3GNT7 N-acetyl glucosamine transferase and CHST6 and CHST1 sulfotransferases to construct and elongate mono- and disulfated disaccharide units [-&gt;3Galbeta1-&gt;4(6-sulfoGlcNAcbeta)1-&gt;] and [-&gt;3(6-sulfoGalbeta)1-&gt;4(6-sulfoGlcNAcbeta)1-&gt;] within keratan sulfate polymer. This chain is Beta-1,4-galactosyltransferase 4 (B4GALT4), found in Cricetulus griseus (Chinese hamster).